We begin with the raw amino-acid sequence, 156 residues long: Small ribosomal subunit protein uS7 (156 aa).

The protein belongs to the universal ribosomal protein uS7 family. In terms of assembly, part of the 30S ribosomal subunit. Contacts proteins S9 and S11.

One of the primary rRNA binding proteins, it binds directly to 16S rRNA where it nucleates assembly of the head domain of the 30S subunit. Is located at the subunit interface close to the decoding center, probably blocks exit of the E-site tRNA. This is Small ribosomal subunit protein uS7 from Pseudarthrobacter chlorophenolicus (strain ATCC 700700 / DSM 12829 / CIP 107037 / JCM 12360 / KCTC 9906 / NCIMB 13794 / A6) (Arthrobacter chlorophenolicus).